The chain runs to 361 residues: ATP phosphoribosyltransferase regulatory subunit (361 aa).

Belongs to the class-II aminoacyl-tRNA synthetase family. HisZ subfamily. Heteromultimer composed of HisG and HisZ subunits.

It localises to the cytoplasm. The protein operates within amino-acid biosynthesis; L-histidine biosynthesis; L-histidine from 5-phospho-alpha-D-ribose 1-diphosphate: step 1/9. Its function is as follows. Required for the first step of histidine biosynthesis. May allow the feedback regulation of ATP phosphoribosyltransferase activity by histidine. This is ATP phosphoribosyltransferase regulatory subunit from Thermus thermophilus (strain ATCC 27634 / DSM 579 / HB8).